Here is a 197-residue protein sequence, read N- to C-terminus: A-type ATP synthase subunit E (197 aa).

The protein belongs to the V-ATPase E subunit family. As to quaternary structure, has multiple subunits with at least A(3), B(3), C, D, E, F, H, I and proteolipid K(x).

The protein localises to the cell membrane. Component of the A-type ATP synthase that produces ATP from ADP in the presence of a proton gradient across the membrane. This chain is A-type ATP synthase subunit E, found in Thermococcus gammatolerans (strain DSM 15229 / JCM 11827 / EJ3).